The chain runs to 193 residues: Fe/S biogenesis protein NfuA (193 aa).

Residues Cys-149 and Cys-152 each contribute to the [4Fe-4S] cluster site.

Belongs to the NfuA family. As to quaternary structure, homodimer. [4Fe-4S] cluster serves as cofactor.

Functionally, involved in iron-sulfur cluster biogenesis. Binds a 4Fe-4S cluster, can transfer this cluster to apoproteins, and thereby intervenes in the maturation of Fe/S proteins. Could also act as a scaffold/chaperone for damaged Fe/S proteins. The protein is Fe/S biogenesis protein NfuA of Psychromonas ingrahamii (strain DSM 17664 / CCUG 51855 / 37).